Reading from the N-terminus, the 129-residue chain is Vacuolar transporter chaperone complex subunit 1 (129 aa).

S2 carries the post-translational modification N-acetylserine. Topologically, residues 2-32 (SSAPLLQRTPGKKIALPTRVEPKVFFANERT) are cytoplasmic. The helical transmembrane segment at 33–53 (FLSWLNFTVMLGGLGVGLLNF) threads the bilayer. Over 54–59 (GDKIGR) the chain is Vacuolar. The chain crosses the membrane as a helical span at residues 60–80 (VSAGLFTFVAMGTMIYALVTY). Residues 81 to 98 (HWRAAAIRRRGSGPYDDR) are Cytoplasmic-facing. The helical transmembrane segment at 99–119 (LGPTLLCFFLLVAVIINFILR) threads the bilayer. Residues 120-129 (LKYNDANTKL) are Vacuolar-facing.

Belongs to the VTC1 family. The VTC core complex is an integral membrane heterooligomer composed of the catalytic subunit VTC4 and the accessory subunits VTC1, VTC2 and VTC3. The complex exists in 2 different sub-complexes: VTC1-VTC2-VCT4 and VCT1-VTC3-VTC4. The VCT1-VTC3-VTC4 subcomplex is mostly found on the vacuolar membrane. The VTC1-VTC2-VCT4 subcomplex is observed in the cell periphery, probably ER and nuclear envelope, but localizes to the vacuole under phosphate starvation. Each subunit contains 3 transmembrane helices. VTC1 is a small membrane protein without hydrophilic domain. VTC2, VTC3 and VTC4 are related and have 2 hydrophilic domains that face the cytosol, an N-terminal SPX domain and the central core domain. The central core in VTC4 is the catalytic domain, with the essential catalytic lysine replaced by isoleucine and leucine in VTC2 and VTC3, respectively. The core complex associates with the accessory subunit VTC5. The complex interacts with the v-SNARE NYV1 and with the V(0) subunit of V-ATPase VPH1.

It is found in the vacuole membrane. The protein resides in the cytoplasm. It localises to the cell cortex. Its subcellular location is the endoplasmic reticulum membrane. The protein localises to the cytoplasmic vesicle. It is found in the autophagosome membrane. In terms of biological role, accessory subunit of the vacuolar transporter chaperone (VTC) complex. The VTC complex acts as a vacuolar polyphosphate polymerase that catalyzes the synthesis of inorganic polyphosphate (polyP) via transfer of phosphate from ATP to a growing polyP chain, releasing ADP. VTC exposes its catalytic domain VTC4 to the cytosol, where the growing polyP chain winds through a tunnel-shaped pocket, integrating cytoplasmic polymer synthesis with polyP membrane translocation. The VTC complex carries 9 vacuolar transmembrane domains, which are likely to constitute the translocation channel into the organelle lumen. PolyP synthesis is tightly coupled to its transport into the vacuole lumen, in order to avoid otherwise toxic intermediates in the cytosol, and it depends on the proton gradient across the membrane, formed by V-ATPase. VTC1 contributes only 3 transmembrane domains to the complex. The VTC complex also plays a role in vacuolar membrane fusion. Required for SEC18/NSF activity in SNARE priming, membrane binding of LMA1 and V(0) trans-complex formation. The polypeptide is Vacuolar transporter chaperone complex subunit 1 (Saccharomyces cerevisiae (strain ATCC 204508 / S288c) (Baker's yeast)).